The sequence spans 325 residues: tRNA dimethylallyltransferase (325 aa).

25-32 provides a ligand contact to ATP; sequence GNTGSGKS. 27–32 is a substrate binding site; the sequence is TGSGKS. Residues 50–53 form an interaction with substrate tRNA region; sequence DSRQ.

This sequence belongs to the IPP transferase family. In terms of assembly, monomer. It depends on Mg(2+) as a cofactor.

The catalysed reaction is adenosine(37) in tRNA + dimethylallyl diphosphate = N(6)-dimethylallyladenosine(37) in tRNA + diphosphate. Its function is as follows. Catalyzes the transfer of a dimethylallyl group onto the adenine at position 37 in tRNAs that read codons beginning with uridine, leading to the formation of N6-(dimethylallyl)adenosine (i(6)A). The polypeptide is tRNA dimethylallyltransferase (Dehalococcoides mccartyi (strain ATCC BAA-2266 / KCTC 15142 / 195) (Dehalococcoides ethenogenes (strain 195))).